Consider the following 111-residue polypeptide: Large ribosomal subunit protein uL22 (111 aa).

The protein belongs to the universal ribosomal protein uL22 family. Part of the 50S ribosomal subunit.

Its function is as follows. This protein binds specifically to 23S rRNA; its binding is stimulated by other ribosomal proteins, e.g. L4, L17, and L20. It is important during the early stages of 50S assembly. It makes multiple contacts with different domains of the 23S rRNA in the assembled 50S subunit and ribosome. The globular domain of the protein is located near the polypeptide exit tunnel on the outside of the subunit, while an extended beta-hairpin is found that lines the wall of the exit tunnel in the center of the 70S ribosome. The sequence is that of Large ribosomal subunit protein uL22 from Mycoplasma mycoides subsp. mycoides SC (strain CCUG 32753 / NCTC 10114 / PG1).